The chain runs to 303 residues: Methionyl-tRNA formyltransferase (303 aa).

108 to 111 serves as a coordination point for (6S)-5,6,7,8-tetrahydrofolate; the sequence is SDLP.

It belongs to the Fmt family.

The enzyme catalyses L-methionyl-tRNA(fMet) + (6R)-10-formyltetrahydrofolate = N-formyl-L-methionyl-tRNA(fMet) + (6S)-5,6,7,8-tetrahydrofolate + H(+). In terms of biological role, attaches a formyl group to the free amino group of methionyl-tRNA(fMet). The formyl group appears to play a dual role in the initiator identity of N-formylmethionyl-tRNA by promoting its recognition by IF2 and preventing the misappropriation of this tRNA by the elongation apparatus. The protein is Methionyl-tRNA formyltransferase of Rickettsia peacockii (strain Rustic).